The sequence spans 454 residues: Putative tyrosine kinase 36 (454 aa).

ATP contacts are provided by residues 80 to 88 and Lys98; that span reads LGSGSFGKV. Catalysis depends on Asp192, which acts as the Proton acceptor.

Belongs to the protein kinase superfamily. Tyr protein kinase family.

The catalysed reaction is L-tyrosyl-[protein] + ATP = O-phospho-L-tyrosyl-[protein] + ADP + H(+). This is Putative tyrosine kinase 36 (36) from Alcelaphine herpesvirus 1 (strain C500) (AlHV-1).